The primary structure comprises 40 residues: U4-ctenitoxin-Co1c (40 aa).

4 cysteine pairs are disulfide-bonded: C3–C20, C10–C26, C19–C40, and C28–C38.

Expressed by the venom gland.

The protein resides in the secreted. Its function is as follows. Not toxic to mice by intracerebroventricular injection. In Ctenus ornatus (Brazilian spider), this protein is U4-ctenitoxin-Co1c.